We begin with the raw amino-acid sequence, 457 residues long: tRNA-2-methylthio-N(6)-dimethylallyladenosine synthase (457 aa).

Residues 8–123 (KKVFIKTFGC…LPEMLARRDA (116 aa)) form the MTTase N-terminal domain. [4Fe-4S] cluster is bound by residues Cys-17, Cys-54, Cys-86, Cys-160, Cys-164, and Cys-167. Positions 146-379 (RVDGATAFVS…QEAIEANGRR (234 aa)) constitute a Radical SAM core domain. The 68-residue stretch at 382 to 449 (QSRVGTVQRI…PHSLRGEVLL (68 aa)) folds into the TRAM domain.

The protein belongs to the methylthiotransferase family. MiaB subfamily. In terms of assembly, monomer. Requires [4Fe-4S] cluster as cofactor.

It is found in the cytoplasm. The enzyme catalyses N(6)-dimethylallyladenosine(37) in tRNA + (sulfur carrier)-SH + AH2 + 2 S-adenosyl-L-methionine = 2-methylsulfanyl-N(6)-dimethylallyladenosine(37) in tRNA + (sulfur carrier)-H + 5'-deoxyadenosine + L-methionine + A + S-adenosyl-L-homocysteine + 2 H(+). Catalyzes the methylthiolation of N6-(dimethylallyl)adenosine (i(6)A), leading to the formation of 2-methylthio-N6-(dimethylallyl)adenosine (ms(2)i(6)A) at position 37 in tRNAs that read codons beginning with uridine. The protein is tRNA-2-methylthio-N(6)-dimethylallyladenosine synthase of Methylibium petroleiphilum (strain ATCC BAA-1232 / LMG 22953 / PM1).